Consider the following 460-residue polypeptide: Hemopexin (460 aa).

Residues 1-23 (MARTVVALNILVLLGLCWSLAVA) form the signal peptide. Residues Asn-38 and Asn-64 are each glycosylated (N-linked (GlcNAc...) asparagine). Cystine bridges form between Cys-50–Cys-230, Cys-148–Cys-153, and Cys-187–Cys-199. 4 Hemopexin repeats span residues 53-93 (AWSF…WKNP), 94-138 (VTSV…FPGI), 139-183 (PYPP…SWPA), and 184-230 (VGNC…FISC). Residue His-79 participates in heme binding. His-149 provides a ligand contact to heme. Asn-186 carries an N-linked (GlcNAc...) asparagine glycan. Heme is bound at residue His-235. Asn-240 and Asn-246 each carry an N-linked (GlcNAc...) asparagine glycan. Intrachain disulfides connect Cys-255/Cys-458, Cys-364/Cys-406, and Cys-416/Cys-433. Hemopexin repeat units follow at residues 257-302 (ADPG…WPQG), 303-350 (PSAV…LGSP), 355-394 (LDTIDAAFSCPGSSKLYVTSGRRLWWLDLKSGAQATWAEL), and 398-448 (HEKV…SLPQ). Position 291 (His-291) interacts with heme.

Belongs to the hemopexin family. Expressed by the liver and secreted in plasma.

The protein resides in the secreted. Binds heme and transports it to the liver for breakdown and iron recovery, after which the free hemopexin returns to the circulation. The protein is Hemopexin (Hpx) of Rattus norvegicus (Rat).